A 552-amino-acid chain; its full sequence is Chaperonin GroEL (552 aa).

ATP is bound by residues 30–33 (TLGP), Lys-51, 87–91 (DGTTT), Gly-415, and Asp-496.

The protein belongs to the chaperonin (HSP60) family. As to quaternary structure, forms a cylinder of 14 subunits composed of two heptameric rings stacked back-to-back. Interacts with the co-chaperonin GroES.

It is found in the cytoplasm. The enzyme catalyses ATP + H2O + a folded polypeptide = ADP + phosphate + an unfolded polypeptide.. Its function is as follows. Together with its co-chaperonin GroES, plays an essential role in assisting protein folding. The GroEL-GroES system forms a nano-cage that allows encapsulation of the non-native substrate proteins and provides a physical environment optimized to promote and accelerate protein folding. This Paramagnetospirillum magneticum (strain ATCC 700264 / AMB-1) (Magnetospirillum magneticum) protein is Chaperonin GroEL.